A 322-amino-acid chain; its full sequence is MTKNATSASVITRLSPAKINLFLHITGKRADGYHNLQTVFRLLDWGDYLHFSVADELIITIDSVADNSAVDNSSLCGQLLTLSGADTITSSIEDNLIFKAANALLASAINSNSLPKNLPKVSVRLDKHLPMGAGLGGGSSNAATTLLVLNKIWQINFDQDTLIKIGASIGADVPIFIFGQDAIAMGIGEELTAIDLPEQQYLVLTPKAHVNTAELFAHSKLQRDIAPLSIKTIQNHSNDYVQHLNTPYQNVFTPVVTNLAPAVDEALRYLQELETQALSTARMTGSGSAVFLPLDAGVISDKARLAKWIEEAPCPAYLVRNL.

Lys18 is an active-site residue. Residue 130–140 (PMGAGLGGGSS) participates in ATP binding. The active site involves Asp172.

Belongs to the GHMP kinase family. IspE subfamily.

The catalysed reaction is 4-CDP-2-C-methyl-D-erythritol + ATP = 4-CDP-2-C-methyl-D-erythritol 2-phosphate + ADP + H(+). It participates in isoprenoid biosynthesis; isopentenyl diphosphate biosynthesis via DXP pathway; isopentenyl diphosphate from 1-deoxy-D-xylulose 5-phosphate: step 3/6. Catalyzes the phosphorylation of the position 2 hydroxy group of 4-diphosphocytidyl-2C-methyl-D-erythritol. In Psychrobacter cryohalolentis (strain ATCC BAA-1226 / DSM 17306 / VKM B-2378 / K5), this protein is 4-diphosphocytidyl-2-C-methyl-D-erythritol kinase.